We begin with the raw amino-acid sequence, 154 residues long: Large ribosomal subunit protein uL13 (154 aa).

This sequence belongs to the universal ribosomal protein uL13 family. In terms of assembly, part of the 50S ribosomal subunit.

Its function is as follows. This protein is one of the early assembly proteins of the 50S ribosomal subunit, although it is not seen to bind rRNA by itself. It is important during the early stages of 50S assembly. This is Large ribosomal subunit protein uL13 from Bradyrhizobium diazoefficiens (strain JCM 10833 / BCRC 13528 / IAM 13628 / NBRC 14792 / USDA 110).